The following is a 173-amino-acid chain: Putative metal-dependent hydrolase BA_2700/GBAA_2700/BAS2515 (173 aa).

The Zn(2+) site is built by His65, His156, and His160.

The protein belongs to the metal hydrolase YfiT family. As to quaternary structure, homodimer. The cofactor is Zn(2+).

The protein localises to the cytoplasm. In terms of biological role, possible metal-dependent hydrolase. The chain is Putative metal-dependent hydrolase BA_2700/GBAA_2700/BAS2515 from Bacillus anthracis.